The primary structure comprises 352 residues: Protein RecA (352 aa).

67 to 74 contacts ATP; the sequence is GPESSGKT. The segment at 330–352 is disordered; the sequence is STPKPEAESQEKAAAAQDDDSLV.

The protein belongs to the RecA family.

It is found in the cytoplasm. Functionally, can catalyze the hydrolysis of ATP in the presence of single-stranded DNA, the ATP-dependent uptake of single-stranded DNA by duplex DNA, and the ATP-dependent hybridization of homologous single-stranded DNAs. It interacts with LexA causing its activation and leading to its autocatalytic cleavage. The protein is Protein RecA of Chromohalobacter salexigens (strain ATCC BAA-138 / DSM 3043 / CIP 106854 / NCIMB 13768 / 1H11).